A 272-amino-acid polypeptide reads, in one-letter code: Protein UL11 (272 aa).

The N-terminal stretch at 1–31 (MLFRYITFHREKVLYLTAACIFGVYISLHDA) is a signal peptide. The Extracellular segment spans residues 32 to 224 (CIPVVGKIGT…PLQPSPQHQH (193 aa)). N-linked (GlcNAc...) asparagine; by host glycosylation is found at Asn42, Asn93, Asn100, and Asn142. Positions 142–200 (NGTFPTTTTKKPTTTTRTTTTTTQRTTTTRTTTTAKKTTISTTHHKHPSPKKSTTPNSH) are disordered. Residues 147–183 (TTTTKKPTTTTRTTTTTTQRTTTTRTTTTAKKTTIST) are compositionally biased toward low complexity. The chain crosses the membrane as a helical span at residues 225–245 (LATHALWVLAVVIVIIIIIIF). Residues 246–272 (YFRIPQKLWLLWQHDKHGIVLIPQTDL) lie on the Cytoplasmic side of the membrane.

Belongs to the RL11 family. Interacts with host PTPRC; this interaction affects T-cell signaling. In terms of processing, glycosylated.

The protein localises to the host cell membrane. It is found in the host endoplasmic reticulum. Functionally, plays a role in the modulation of host immune response by modulating T-cell function. Interacts with host PTPRC/CD45 and thereby reduces host TCR signaling and T-cell proliferation. The sequence is that of Protein UL11 (UL11) from Human cytomegalovirus (strain Merlin) (HHV-5).